Reading from the N-terminus, the 127-residue chain is Major sperm protein isoform beta (127 aa).

A2 is modified (N-acetylalanine). In terms of domain architecture, MSP spans 9 to 126 (DINTQPGSKI…RRKNLPIEYN (118 aa)).

As to quaternary structure, forms filaments 10 nm wide, with a characteristic substructure repeating axially at 9 nm. Sperm.

The protein resides in the cell projection. The protein localises to the pseudopodium. Its subcellular location is the cytoplasm. It is found in the cytoskeleton. Functionally, central component in molecular interactions underlying sperm crawling. Forms an extensive filament system that extends from sperm villipoda, along the leading edge of the pseudopod. This is Major sperm protein isoform beta from Ascaris suum (Pig roundworm).